We begin with the raw amino-acid sequence, 308 residues long: Putative S-adenosyl-L-methionine-dependent methyltransferase Mb3816c (308 aa).

Residues Asp131 and 160–161 each bind S-adenosyl-L-methionine; that span reads DL.

It belongs to the UPF0677 family.

Exhibits S-adenosyl-L-methionine-dependent methyltransferase activity. In Mycobacterium bovis (strain ATCC BAA-935 / AF2122/97), this protein is Putative S-adenosyl-L-methionine-dependent methyltransferase Mb3816c.